A 201-amino-acid polypeptide reads, in one-letter code: 3-isopropylmalate dehydratase small subunit (201 aa).

It belongs to the LeuD family. LeuD type 1 subfamily. As to quaternary structure, heterodimer of LeuC and LeuD.

It carries out the reaction (2R,3S)-3-isopropylmalate = (2S)-2-isopropylmalate. It participates in amino-acid biosynthesis; L-leucine biosynthesis; L-leucine from 3-methyl-2-oxobutanoate: step 2/4. Its function is as follows. Catalyzes the isomerization between 2-isopropylmalate and 3-isopropylmalate, via the formation of 2-isopropylmaleate. The protein is 3-isopropylmalate dehydratase small subunit of Buchnera aphidicola subsp. Baizongia pistaciae (strain Bp).